The primary structure comprises 184 residues: Photosystem I assembly protein Ycf4 (184 aa).

2 helical membrane-spanning segments follow: residues 22-42 (FCWA…GIPS) and 64-84 (IVMC…WCTI).

It belongs to the Ycf4 family.

The protein localises to the plastid. It localises to the chloroplast thylakoid membrane. Seems to be required for the assembly of the photosystem I complex. This chain is Photosystem I assembly protein Ycf4, found in Huperzia lucidula (Shining clubmoss).